The sequence spans 192 residues: uncharacterized protein (192 aa).

Residues 29–160 enclose the Nudix hydrolase domain; that stretch reads QRQAAVLVPI…PLDIHRRGND (132 aa). The Nudix box motif lies at 67–89; it reads GAVDNTDATLIAAALREAQEEVA. Residues E83 and E87 each contribute to the Mg(2+) site.

It belongs to the Nudix hydrolase family. PCD1 subfamily. The cofactor is Mn(2+). Mg(2+) is required as a cofactor.

Its function is as follows. Probably mediates the hydrolysis of some nucleoside diphosphate derivatives. This is an uncharacterized protein from Klebsiella pneumoniae subsp. pneumoniae (strain ATCC 700721 / MGH 78578).